The primary structure comprises 336 residues: tRNA-dihydrouridine(20/20a) synthase (336 aa).

FMN-binding positions include 24–26 (PMM) and glutamine 77. Cysteine 107 serves as the catalytic Proton donor. Residues lysine 146, histidine 178, 218-220 (NGG), and 240-241 (GR) contribute to the FMN site.

This sequence belongs to the Dus family. DusA subfamily. Requires FMN as cofactor.

It carries out the reaction 5,6-dihydrouridine(20) in tRNA + NADP(+) = uridine(20) in tRNA + NADPH + H(+). The enzyme catalyses 5,6-dihydrouridine(20) in tRNA + NAD(+) = uridine(20) in tRNA + NADH + H(+). The catalysed reaction is 5,6-dihydrouridine(20a) in tRNA + NADP(+) = uridine(20a) in tRNA + NADPH + H(+). It catalyses the reaction 5,6-dihydrouridine(20a) in tRNA + NAD(+) = uridine(20a) in tRNA + NADH + H(+). In terms of biological role, catalyzes the synthesis of 5,6-dihydrouridine (D), a modified base found in the D-loop of most tRNAs, via the reduction of the C5-C6 double bond in target uridines. Specifically modifies U20 and U20a in tRNAs. The sequence is that of tRNA-dihydrouridine(20/20a) synthase from Pseudomonas syringae pv. tomato (strain ATCC BAA-871 / DC3000).